The chain runs to 156 residues: Ribosomal RNA large subunit methyltransferase H (156 aa).

S-adenosyl-L-methionine-binding positions include L73, G104, and 123–128 (ISSMTL).

This sequence belongs to the RNA methyltransferase RlmH family. In terms of assembly, homodimer.

Its subcellular location is the cytoplasm. The enzyme catalyses pseudouridine(1915) in 23S rRNA + S-adenosyl-L-methionine = N(3)-methylpseudouridine(1915) in 23S rRNA + S-adenosyl-L-homocysteine + H(+). Specifically methylates the pseudouridine at position 1915 (m3Psi1915) in 23S rRNA. In Burkholderia multivorans (strain ATCC 17616 / 249), this protein is Ribosomal RNA large subunit methyltransferase H.